A 256-amino-acid polypeptide reads, in one-letter code: Ethylene-responsive transcription factor ERF084 (256 aa).

Residues Gly115 to Val172 constitute a DNA-binding region (AP2/ERF).

This sequence belongs to the AP2/ERF transcription factor family. ERF subfamily.

Its subcellular location is the nucleus. Its function is as follows. Probably acts as a transcriptional activator. Binds to the GCC-box pathogenesis-related promoter element. May be involved in the regulation of gene expression by stress factors and by components of stress signal transduction pathways. The protein is Ethylene-responsive transcription factor ERF084 (ERF084) of Arabidopsis thaliana (Mouse-ear cress).